Reading from the N-terminus, the 273-residue chain is Putative pyruvate, phosphate dikinase regulatory protein (273 aa).

153–160 serves as a coordination point for ADP; that stretch reads GVSRTSKT.

It belongs to the pyruvate, phosphate/water dikinase regulatory protein family. PDRP subfamily.

The enzyme catalyses N(tele)-phospho-L-histidyl/L-threonyl-[pyruvate, phosphate dikinase] + ADP = N(tele)-phospho-L-histidyl/O-phospho-L-threonyl-[pyruvate, phosphate dikinase] + AMP + H(+). It catalyses the reaction N(tele)-phospho-L-histidyl/O-phospho-L-threonyl-[pyruvate, phosphate dikinase] + phosphate + H(+) = N(tele)-phospho-L-histidyl/L-threonyl-[pyruvate, phosphate dikinase] + diphosphate. Bifunctional serine/threonine kinase and phosphorylase involved in the regulation of the pyruvate, phosphate dikinase (PPDK) by catalyzing its phosphorylation/dephosphorylation. This is Putative pyruvate, phosphate dikinase regulatory protein from Rhizobium meliloti (strain 1021) (Ensifer meliloti).